An 87-amino-acid chain; its full sequence is Small ribosomal subunit protein bS20 (87 aa).

This sequence belongs to the bacterial ribosomal protein bS20 family.

Functionally, binds directly to 16S ribosomal RNA. The chain is Small ribosomal subunit protein bS20 from Corynebacterium urealyticum (strain ATCC 43042 / DSM 7109).